The sequence spans 1145 residues: Error-prone DNA polymerase (1145 aa).

It belongs to the DNA polymerase type-C family. DnaE2 subfamily.

It localises to the cytoplasm. It catalyses the reaction DNA(n) + a 2'-deoxyribonucleoside 5'-triphosphate = DNA(n+1) + diphosphate. Functionally, DNA polymerase involved in damage-induced mutagenesis and translesion synthesis (TLS). It is not the major replicative DNA polymerase. In Rhodopirellula baltica (strain DSM 10527 / NCIMB 13988 / SH1), this protein is Error-prone DNA polymerase.